Reading from the N-terminus, the 577-residue chain is Gamma-tubulin complex component gfh1 (577 aa).

The protein belongs to the TUBGCP family.

It is found in the cytoplasm. Its subcellular location is the cytoskeleton. The protein resides in the microtubule organizing center. The protein localises to the spindle pole body. In terms of biological role, required for proper anchoring of astral microtubules at the spindle pole bodies (SPBs), during anaphase, ensuring correct cell polarity. The protein is Gamma-tubulin complex component gfh1 (gfh1) of Schizosaccharomyces pombe (strain 972 / ATCC 24843) (Fission yeast).